A 542-amino-acid chain; its full sequence is Protein MPA43 (542 aa).

This is Protein MPA43 (MPA43) from Saccharomyces cerevisiae (strain ATCC 204508 / S288c) (Baker's yeast).